The sequence spans 227 residues: Large ribosomal subunit protein uL3 (227 aa).

Glutamine 151 bears the N5-methylglutamine mark.

It belongs to the universal ribosomal protein uL3 family. In terms of assembly, part of the 50S ribosomal subunit. Forms a cluster with proteins L14 and L19. In terms of processing, methylated by PrmB.

Its function is as follows. One of the primary rRNA binding proteins, it binds directly near the 3'-end of the 23S rRNA, where it nucleates assembly of the 50S subunit. This is Large ribosomal subunit protein uL3 from Gluconacetobacter diazotrophicus (strain ATCC 49037 / DSM 5601 / CCUG 37298 / CIP 103539 / LMG 7603 / PAl5).